Consider the following 506-residue polypeptide: ATP synthase subunit alpha, chloroplastic (506 aa).

170–177 (GDRQTGKT) is a binding site for ATP.

It belongs to the ATPase alpha/beta chains family. In terms of assembly, F-type ATPases have 2 components, CF(1) - the catalytic core - and CF(0) - the membrane proton channel. CF(1) has five subunits: alpha(3), beta(3), gamma(1), delta(1), epsilon(1). CF(0) has four main subunits: a, b, b' and c.

Its subcellular location is the plastid. It is found in the chloroplast thylakoid membrane. The catalysed reaction is ATP + H2O + 4 H(+)(in) = ADP + phosphate + 5 H(+)(out). Its function is as follows. Produces ATP from ADP in the presence of a proton gradient across the membrane. The alpha chain is a regulatory subunit. This chain is ATP synthase subunit alpha, chloroplastic, found in Chlorella vulgaris (Green alga).